The following is a 188-amino-acid chain: Putative 3-methyladenine DNA glycosylase (188 aa).

This sequence belongs to the DNA glycosylase MPG family.

The protein is Putative 3-methyladenine DNA glycosylase of Ehrlichia ruminantium (Cowdria ruminantium).